The following is a 266-amino-acid chain: 2-dehydro-3-deoxy-D-gluconate/2-dehydro-3-deoxy-phosphogluconate aldolase (266 aa).

Residues 36–37 (ST), 123–125 (YNI), and 151–153 (KDS) contribute to the substrate site. Lys151 acts as the Schiff-base intermediate with substrate in catalysis.

This sequence belongs to the DapA family. KDPG aldolase subfamily. In terms of assembly, homotetramer; dimer of dimers.

It carries out the reaction 2-dehydro-3-deoxy-6-phospho-D-gluconate = D-glyceraldehyde 3-phosphate + pyruvate. The catalysed reaction is 2-dehydro-3-deoxy-D-gluconate = D-glyceraldehyde + pyruvate. It catalyses the reaction 2-dehydro-3-deoxy-6-phospho-D-galactonate = D-glyceraldehyde 3-phosphate + pyruvate. The enzyme catalyses 2-dehydro-3-deoxy-D-galactonate = D-glyceraldehyde + pyruvate. Its pathway is carbohydrate acid metabolism; 2-dehydro-3-deoxy-D-gluconate degradation; D-glyceraldehyde 3-phosphate and pyruvate from 2-dehydro-3-deoxy-D-gluconate: step 2/2. Its function is as follows. Involved in the degradation of glucose via the Entner-Doudoroff pathway. Catalyzes the reversible cleavage of 2-keto-3-deoxy-6-phosphogluconate (KDPG) and 2-keto-3-deoxygluconate (KDG) forming pyruvate and glyceraldehyde 3-phosphate or glyceraldehyde, respectively. It is also able to catalyze the reversible cleavage of 2-keto-3-deoxy-6-phosphogalactonate (KDPGal) and 2-keto-3-deoxygalactonate (KDGal). It is equally active with both D- and L-glyceraldehyde. In Picrophilus torridus (strain ATCC 700027 / DSM 9790 / JCM 10055 / NBRC 100828 / KAW 2/3), this protein is 2-dehydro-3-deoxy-D-gluconate/2-dehydro-3-deoxy-phosphogluconate aldolase.